We begin with the raw amino-acid sequence, 251 residues long: uncharacterized protein (251 aa).

The tract at residues 229–251 is disordered; the sequence is TSTETSPEHQADLKDDNSDISST. Over residues 234-245 the composition is skewed to basic and acidic residues; sequence SPEHQADLKDDN.

This is an uncharacterized protein from Acanthamoeba polyphaga (Amoeba).